Reading from the N-terminus, the 627-residue chain is Carene synthase 3, chloroplastic (627 aa).

A chloroplast-targeting transit peptide spans 1–36; that stretch reads MSVISIVPLASKSCLYKSLMSSTHELKALCRPIATL. Mg(2+)-binding residues include Asp378, Asp382, and Asp530. The DDXXD motif motif lies at 378–382; the sequence is DDMYD.

Belongs to the terpene synthase family. Tpsd subfamily. The cofactor is Mg(2+). Mn(2+) is required as a cofactor.

The protein localises to the plastid. It is found in the chloroplast. The enzyme catalyses (2E)-geranyl diphosphate = (+)-car-3-ene + diphosphate. It functions in the pathway terpene metabolism; oleoresin biosynthesis. Terpene synthase (TPS) involved in defensive oleoresin formation in conifers in response to insect attack or other injury. This chain is Carene synthase 3, chloroplastic (TPS-3car3), found in Picea sitchensis (Sitka spruce).